A 217-amino-acid polypeptide reads, in one-letter code: Homeobox protein Hox-B7 (217 aa).

The short motif at 126–131 (IYPWMR) is the Antp-type hexapeptide element. Residues 137–196 (RKRGRQTYTRYQTLELEKEFHYNRYLTRRRRIEIAHTLCLTERQIKIWFQNRRMKWKKEN) constitute a DNA-binding region (homeobox). Positions 194–217 (KENKTAGPGTTGQDRAEAEEEEEE) are disordered.

Belongs to the Antp homeobox family. In terms of assembly, forms a DNA-binding heterodimer with transcription factor PBX1.

The protein resides in the nucleus. In terms of biological role, sequence-specific transcription factor which is part of a developmental regulatory system that provides cells with specific positional identities on the anterior-posterior axis. This chain is Homeobox protein Hox-B7 (HOXB7), found in Homo sapiens (Human).